A 427-amino-acid chain; its full sequence is Caspase recruitment domain-containing protein 8 (427 aa).

Positions 1-23 (MGIPTSSVSEEQESSEGQDSGDI) are disordered. Positions 51–186 (FLGPEGNVDV…FYAVLEKPSF (136 aa)) are ZU5. Residues 51–336 (FLGPEGNVDV…IQLGAASAPP (286 aa)) form the FIIND domain. The tract at residues 187-336 (SLMGILLRIA…IQLGAASAPP (150 aa)) is UPA. Positions 336-426 (PAFSGAAFVK…YLVSYLRQQS (91 aa)) constitute a CARD domain.

In terms of assembly, interacts with DPP9; leading to inhibit activation of the inflammasome. DPP9 acts via formation of a ternary complex, composed of a DPP9 homodimer, one full-length CARD8 protein, and one cleaved C-terminus of CARD8 (Caspase recruitment domain-containing protein 8, C-terminus). Interacts with DPP8; leading to inhibit activation of the inflammasome, probably via formation of a ternary complex with DPP8. Interacts with NLRP3. Interacts with IKBKG/NEMO. Interacts with DRAL. Binds to caspase-1 (CASP1), CARD16/pseudo-ICE and CARD18/ICEBERG. Interacts with NLRP2 (via NACHT domain). Interacts with the C-terminal part of CARD8 (Caspase recruitment domain-containing protein 8, C-terminus) in absence of pathogens and other damage-associated signals. As to quaternary structure, interacts with the N-terminal part of CARD8 (Caspase recruitment domain-containing protein 8, N-terminus) in absence of pathogens and other damage-associated signals. Homomultimer; forms the CARD8 inflammasome polymeric complex, a filament composed of homopolymers of this form in response to pathogens and other damage-associated signals. The CARD8 inflammasome polymeric complex directly recruits pro-caspase-1 (proCASP1) independently of PYCARD/ASC. Interacts (via CARD domain) with CASP1 (via CARD domain); leading to CASP1 activation. Undergoes autocatalytic processing within the FIIND domain to generate the N-terminal and C-terminal parts, which are associated non-covalently in absence of pathogens and other damage-associated signals. Post-translationally, ubiquitinated by the N-end rule pathway in response to pathogens and other damage-associated signals, leading to its degradation by the proteasome and subsequent release of the cleaved C-terminal part of the protein (Caspase recruitment domain-containing protein 8, C-terminus), which polymerizes and forms the CARD8 inflammasome.

The protein localises to the cytoplasm. The protein resides in the nucleus. It is found in the inflammasome. Its activity is regulated as follows. CARD8 inflammasome is inhibited by DPP8 and DPP9, which sequester the C-terminal fragment of CARD8 (Caspase recruitment domain-containing protein 8, C-terminus) in a ternary complex, thereby preventing CARD8 oligomerization and activation. CARD8 inflammasome is activated by Val-boroPro (Talabostat, PT-100), an inhibitor of dipeptidyl peptidases DPP8 and DPP9. Val-boroPro relieves inhibition of DPP8 and/or DPP9 by inducing the proteasome-mediated destruction of the N-terminal part of CARD8, releasing its C-terminal part from autoinhibition. Functionally, inflammasome sensor, which mediates inflammasome activation in response to various pathogen-associated signals, leading to subsequent pyroptosis of CD4(+) T-cells and macrophages. Inflammasomes are supramolecular complexes that assemble in the cytosol in response to pathogens and other damage-associated signals and play critical roles in innate immunity and inflammation. Acts as a recognition receptor (PRR): recognizes specific pathogens and other damage-associated signals, such as Val-boroPro inhibitor, and mediates CARD8 inflammasome activation. In response to pathogen-associated signals, the N-terminal part of CARD8 is degraded by the proteasome, releasing the cleaved C-terminal part of the protein (Caspase recruitment domain-containing protein 8, C-terminus), which polymerizes to initiate the formation of the inflammasome complex: the CARD8 inflammasome directly recruits pro-caspase-1 (proCASP1) independently of PYCARD/ASC and promotes caspase-1 (CASP1) activation, which subsequently cleaves and activates inflammatory cytokines IL1B and IL18 and gasdermin-D (GSDMD), leading to pyroptosis. Also acts as a negative regulator of the NLRP3 inflammasome. May also act as an inhibitor of NF-kappa-B activation. Its function is as follows. Constitutes the precursor of the CARD8 inflammasome, which mediates autoproteolytic processing within the FIIND domain to generate the N-terminal and C-terminal parts, which are associated non-covalently in absence of pathogens and other damage-associated signals. Regulatory part that prevents formation of the CARD8 inflammasome: in absence of pathogens and other damage-associated signals, interacts with the C-terminal part of CARD8 (Caspase recruitment domain-containing protein 8, C-terminus), preventing activation of the CARD8 inflammasome. In response to pathogen-associated signals, this part is ubiquitinated by the N-end rule pathway and degraded by the proteasome, releasing the cleaved C-terminal part of the protein, which polymerizes and forms the CARD8 inflammasome. In terms of biological role, constitutes the active part of the CARD8 inflammasome. In absence of pathogens and other damage-associated signals, interacts with the N-terminal part of CARD8 (Caspase recruitment domain-containing protein 8, N-terminus), preventing activation of the CARD8 inflammasome. In response to pathogen-associated signals, the N-terminal part of CARD8 is degraded by the proteasome, releasing this form, which polymerizes to form the CARD8 inflammasome complex: the CARD8 inflammasome complex then directly recruits pro-caspase-1 (proCASP1) and promotes caspase-1 (CASP1) activation, leading to gasdermin-D (GSDMD) cleavage and subsequent pyroptosis. This chain is Caspase recruitment domain-containing protein 8, found in Pongo abelii (Sumatran orangutan).